We begin with the raw amino-acid sequence, 266 residues long: Transcription factor atoh8 (266 aa).

A disordered region spans residues 140–164 (AASQAPAGGSERAESPRKRAGEPSG). The segment covering 150–160 (ERAESPRKRAG) has biased composition (basic and acidic residues). Residues 175–188 (TRRLLANARERTRV) form a basic motif; degenerate region. The bHLH domain occupies 175–227 (TRRLLANARERTRVHTISAAFEALRKQVPCYSYGQKLSKLAILRIACNYILSL). The interval 189–227 (HTISAAFEALRKQVPCYSYGQKLSKLAILRIACNYILSL) is helix-loop-helix motif.

Its subcellular location is the nucleus. The protein resides in the nucleus speckle. The protein localises to the cytoplasm. Its function is as follows. Transcription factor that binds a palindromic (canonical) core consensus DNA sequence 5'-CANNTG- 3' known as an E-box element, possibly as a heterodimer with other bHLH proteins. During development, is required for heart looping and swim bladder formation by acting in concert with GATA4 and ZFPM1. During the development of both the retina and skeletal muscles is required for neural retinal cell through modulating PAX6 and NEUROG3 expression and myogenic differentiation. The chain is Transcription factor atoh8 from Danio rerio (Zebrafish).